The sequence spans 134 residues: Holo-[acyl-carrier-protein] synthase (134 aa).

Mg(2+)-binding residues include Asp8 and Glu58.

This sequence belongs to the P-Pant transferase superfamily. AcpS family. Requires Mg(2+) as cofactor.

The protein resides in the cytoplasm. It catalyses the reaction apo-[ACP] + CoA = holo-[ACP] + adenosine 3',5'-bisphosphate + H(+). Its function is as follows. Transfers the 4'-phosphopantetheine moiety from coenzyme A to a Ser of acyl-carrier-protein. The polypeptide is Holo-[acyl-carrier-protein] synthase (Acidiphilium cryptum (strain JF-5)).